Consider the following 1357-residue polypeptide: Vascular endothelial growth factor receptor 2 (1357 aa).

Residues 1 to 22 form the signal peptide; the sequence is MAKTSYALLLLDILLTFNVAKA. The Extracellular portion of the chain corresponds to 23 to 774; that stretch reads IELRFVPDPP…GAEEKMNVEL (752 aa). Ig-like C2-type domains are found at residues 32–120, 120–222, 216–330, 335–426, 433–553, 556–667, and 676–762; these read PTLN…SVAV, VYVF…VAVV, PYIV…ASLI, PFIA…RTFQ, PRIF…VIVF, TRFL…LLHN, and SRIV…ARIS. Residues Asn35, Asn44, Asn66, Asn97, Asn161, Asn209, Asn247, Asn272, Asn303, Asn307, Asn407, Asn501, Asn560, Asn621, Asn631, Asn640, Asn681, Asn688, and Asn713 are each glycosylated (N-linked (GlcNAc...) asparagine). 2 cysteine pairs are disulfide-bonded: Cys53/Cys104 and Cys153/Cys203. A disulfide bridge links Cys248 with Cys314. Cys457 and Cys538 form a disulfide bridge. The cysteines at positions 579 and 651 are disulfide-linked. Residues Cys697 and Cys746 are joined by a disulfide bond. Residues 775 to 795 form a helical membrane-spanning segment; the sequence is IMPIGAVVIAMFLWLLIVFVI. At 796-1357 the chain is on the cytoplasmic side; the sequence is RNRKRPNDGD…AEVRYSAPPV (562 aa). A Protein kinase domain is found at 843–1173; it reads LKLGEPLGRG…FTQLVEHLGN (331 aa). Residues 849-857 and Lys877 contribute to the ATP site; that span reads LGRGAFGQV. The disordered stretch occupies residues 944–975; it reads YSPYKKRTPRMPNRREVQQDEDPREGDLGLGT. The Proton acceptor role is filled by Asp1039. Phosphotyrosine; by autocatalysis occurs at positions 1065, 1070, 1186, and 1222. Residues 1296-1357 are disordered; sequence SLASESSNQT…AEVRYSAPPV (62 aa). The span at 1298 to 1312 shows a compositional bias: polar residues; the sequence is ASESSNQTSGYQSGY.

The protein belongs to the protein kinase superfamily. Tyr protein kinase family. CSF-1/PDGF receptor subfamily. As to quaternary structure, interacts with isoform VEGF165 of vegfaa and, to a lesser extent, with isoform VEGF171 of vegfab. Interacts (via juxtamembrane region) with chaperone pdcl3 (via thioredoxin fold region); the interaction leads to increased vegfr2 abundance through inhibition of its ubiquitination and degradation. In terms of tissue distribution, first expressed in embryos between 5- and 7-somites in the bilateral stripes that contain the developing angioblasts, and then localized to the intermediate cell mass (ICM) and the developing vasculature. By 30 hpf, expressed in the major trunk, head and intersomitic vessels, persisting through 4 dpf when expression is seen in developing subintestinal veins and in the remaining vasculature.

It localises to the cell membrane. It is found in the cytoplasm. Its subcellular location is the nucleus. The protein resides in the cytoplasmic vesicle. The protein localises to the early endosome. It localises to the cell junction. It is found in the endoplasmic reticulum. The enzyme catalyses L-tyrosyl-[protein] + ATP = O-phospho-L-tyrosyl-[protein] + ADP + H(+). Receptor for VEGF or VEGFC. Has a tyrosine-protein kinase activity. Combinations of multiple VEGF receptors are required for development of different blood vessel types in the embryo. Involved in angiogenesis, specifically in VEGF-induced sprouting of new blood vessels. Particularly involved in artery formation. Does not appear to be required for hematopoiesis. This Danio rerio (Zebrafish) protein is Vascular endothelial growth factor receptor 2.